A 467-amino-acid polypeptide reads, in one-letter code: Cysteine--tRNA ligase (467 aa).

Cys-29 is a binding site for Zn(2+). The 'HIGH' region motif lies at 31–41; sequence PTVYNYVHIGN. Residues Cys-209, His-234, and Glu-238 each contribute to the Zn(2+) site. Residues 267-271 carry the 'KMSKS' region motif; that stretch reads KMSKS. Lys-270 serves as a coordination point for ATP.

This sequence belongs to the class-I aminoacyl-tRNA synthetase family. Monomer. The cofactor is Zn(2+).

The protein resides in the cytoplasm. The enzyme catalyses tRNA(Cys) + L-cysteine + ATP = L-cysteinyl-tRNA(Cys) + AMP + diphosphate. The chain is Cysteine--tRNA ligase from Xylella fastidiosa (strain Temecula1 / ATCC 700964).